The sequence spans 215 residues: Outer-membrane lipoprotein LolB (215 aa).

The first 19 residues, 1–19, serve as a signal peptide directing secretion; it reads MSKLRKITSLIFLTIIMVG. Cys20 is lipidated: N-palmitoyl cysteine. The S-diacylglycerol cysteine moiety is linked to residue Cys20.

The protein belongs to the LolB family. As to quaternary structure, monomer.

Its subcellular location is the cell outer membrane. In terms of biological role, plays a critical role in the incorporation of lipoproteins in the outer membrane after they are released by the LolA protein. The sequence is that of Outer-membrane lipoprotein LolB from Vibrio atlanticus (strain LGP32) (Vibrio splendidus (strain Mel32)).